Here is a 125-residue protein sequence, read N- to C-terminus: Small ribosomal subunit protein uS12c (125 aa).

The disordered stretch occupies residues 104-125 (ASGVKDRKQGRSKYGGKRPKGD). Residues 113 to 125 (GRSKYGGKRPKGD) are compositionally biased toward basic residues.

This sequence belongs to the universal ribosomal protein uS12 family. In terms of assembly, part of the 30S ribosomal subunit.

The protein resides in the plastid. Its subcellular location is the chloroplast. Functionally, with S4 and S5 plays an important role in translational accuracy. Located at the interface of the 30S and 50S subunits. This Emiliania huxleyi (Coccolithophore) protein is Small ribosomal subunit protein uS12c (rps12).